We begin with the raw amino-acid sequence, 288 residues long: Bifunctional protein FolD (288 aa).

Residues 166–168 (GAS) and isoleucine 232 each bind NADP(+).

Belongs to the tetrahydrofolate dehydrogenase/cyclohydrolase family. In terms of assembly, homodimer.

The catalysed reaction is (6R)-5,10-methylene-5,6,7,8-tetrahydrofolate + NADP(+) = (6R)-5,10-methenyltetrahydrofolate + NADPH. It carries out the reaction (6R)-5,10-methenyltetrahydrofolate + H2O = (6R)-10-formyltetrahydrofolate + H(+). It participates in one-carbon metabolism; tetrahydrofolate interconversion. Its function is as follows. Catalyzes the oxidation of 5,10-methylenetetrahydrofolate to 5,10-methenyltetrahydrofolate and then the hydrolysis of 5,10-methenyltetrahydrofolate to 10-formyltetrahydrofolate. The sequence is that of Bifunctional protein FolD from Salmonella arizonae (strain ATCC BAA-731 / CDC346-86 / RSK2980).